The following is a 398-amino-acid chain: Small ribosomal subunit protein mS78 (rPPR3a) (398 aa).

A mitochondrion-targeting transit peptide spans 1-19; the sequence is MSSLSRVLRGTFNTCPIRR. 7 PPR repeats span residues 108-142, 143-173, 179-213, 214-248, 249-283, 284-318, and 319-353; these read KEGFAARIISLYGKAGMFENAQKVFEEMPNRDCKR, SVLSFNALLSAYRLSKKFDVVEELFNELPGK, DIVSYNTLIKALCEKDSLPEAVALLDEIENKGLKP, DIVTFNTLLLSSYLKGQFELGEEIWAKMVEKNVAI, DIRTYNARLLGLANEAKSKELVNLFGELKASGLKP, DVFSFNAMIRGSINEGKMDEAEAWYKEIVKHGYRP, and DKATFALLLPAMCKAGDFESAIELFKETFSKRYLV.

The protein belongs to the PPR family. P subfamily. Component of the mitochondrial ribosome small subunit.

The protein localises to the mitochondrion. The polypeptide is Small ribosomal subunit protein mS78 (rPPR3a) (Arabidopsis thaliana (Mouse-ear cress)).